A 625-amino-acid polypeptide reads, in one-letter code: Sorting nexin-41 (625 aa).

The interval 1–90 (MDYNIFEAVH…STSSHAVVEA (90 aa)) is disordered. The span at 54 to 86 (SPPSSSSLPSSPAHSSSAGSSRASTSSSTSSHA) shows a compositional bias: low complexity. A PX domain is found at 98-235 (VSLSMSTTAT…QKFLNPEFNW (138 aa)). The a 1,2-diacyl-sn-glycero-3-phospho-(1D-myo-inositol-3-phosphate) site is built by Arg153, Ser155, Lys179, and Arg202. 2 coiled-coil regions span residues 437–469 (QFKI…NESL) and 539–563 (QLTE…KDCL).

It belongs to the sorting nexin family. As to quaternary structure, binds to SNX4.

Its subcellular location is the prevacuolar compartment. It localises to the endosome. It is found in the endosome membrane. Involved in proper sorting of the v-SNARE protein SNC1. This chain is Sorting nexin-41 (SNX41), found in Saccharomyces cerevisiae (strain ATCC 204508 / S288c) (Baker's yeast).